We begin with the raw amino-acid sequence, 126 residues long: Basic phospholipase A2 1 (126 aa).

Residues 1–7 (SNRPMPL) constitute a propeptide that is removed on maturation. Cystine bridges form between Cys18–Cys78, Cys33–Cys125, Cys35–Cys51, Cys50–Cys106, Cys57–Cys99, Cys67–Cys92, and Cys85–Cys97. Tyr34, Gly36, and Gly38 together coordinate Ca(2+). The active site involves His54. A Ca(2+)-binding site is contributed by Asp55. Asp100 is an active-site residue.

Belongs to the phospholipase A2 family. Group I subfamily. D49 sub-subfamily. Heterodimer formed between two homologous isoforms: isoform 1 and isoform 2. Requires Ca(2+) as cofactor. As to expression, expressed by the venom gland.

Its subcellular location is the secreted. The catalysed reaction is a 1,2-diacyl-sn-glycero-3-phosphocholine + H2O = a 1-acyl-sn-glycero-3-phosphocholine + a fatty acid + H(+). Functionally, PLA2 catalyzes the calcium-dependent hydrolysis of the 2-acyl groups in 3-sn-phosphoglycerides. This chain is Basic phospholipase A2 1, found in Naja sagittifera (Andaman cobra).